The following is a 200-amino-acid chain: Pyridoxal 5'-phosphate synthase subunit PdxT (200 aa).

Residue 52–54 (GES) coordinates L-glutamine. Cys-84 (nucleophile) is an active-site residue. L-glutamine contacts are provided by residues Arg-116 and 145–146 (IR). Residues His-181 and Glu-183 each act as charge relay system in the active site.

This sequence belongs to the glutaminase PdxT/SNO family. As to quaternary structure, in the presence of PdxS, forms a dodecamer of heterodimers. Only shows activity in the heterodimer.

It catalyses the reaction aldehydo-D-ribose 5-phosphate + D-glyceraldehyde 3-phosphate + L-glutamine = pyridoxal 5'-phosphate + L-glutamate + phosphate + 3 H2O + H(+). The enzyme catalyses L-glutamine + H2O = L-glutamate + NH4(+). It functions in the pathway cofactor biosynthesis; pyridoxal 5'-phosphate biosynthesis. Its function is as follows. Catalyzes the hydrolysis of glutamine to glutamate and ammonia as part of the biosynthesis of pyridoxal 5'-phosphate. The resulting ammonia molecule is channeled to the active site of PdxS. This is Pyridoxal 5'-phosphate synthase subunit PdxT from Saccharolobus islandicus (strain Y.N.15.51 / Yellowstone #2) (Sulfolobus islandicus).